The sequence spans 342 residues: Serpentine receptor class r-10 (342 aa).

Over 1–11 (MTGELWLTLVD) the chain is Extracellular. A helical membrane pass occupies residues 12–32 (TADIVGFSMTFCVNIVLLFLL). The Cytoplasmic portion of the chain corresponds to 33–38 (KNRGKN). The helical transmembrane segment at 39-59 (LGTYKHLMAFFSVFSIFYAII) threads the bilayer. The Extracellular portion of the chain corresponds to 60–92 (ESILRPIMHIENATFFLISRKRFNYSTRLGKIN). N71 and N83 each carry an N-linked (GlcNAc...) asparagine glycan. Residues 93–113 (SAFYCACFATSFVVSGVHFVY) form a helical membrane-spanning segment. At 114–131 (RFFASCKPHLLRSFNMPY) the chain is on the cytoplasmic side. A helical membrane pass occupies residues 132–152 (LLLWPLGCSIPVMMWASVSYF). Residues 153 to 202 (LYPDTAFTEAAVTNVLNTHYHSIKKDNVSYIAYVYYQYDENGVRYVYLKN) lie on the Extracellular side of the membrane. The N-linked (GlcNAc...) asparagine glycan is linked to N179. Residues 203 to 223 (LLGCFVHYFVMSATFVVMFIC) form a helical membrane-spanning segment. Residues 224 to 257 (GYLTWKTMRKHKTASDRTRQLQKQLFKALVLQTL) are Cytoplasmic-facing. The chain crosses the membrane as a helical span at residues 258-278 (IPTIFMYAPTGVMFIAPFFSI). Residues 279 to 285 (NLNANAN) lie on the Extracellular side of the membrane. A helical membrane pass occupies residues 286–306 (FIVFCSFLYPGLDPLILILII). The Cytoplasmic segment spans residues 307 to 342 (RDFRQTVFKFFCLRKKNSVDESRSTTRANMSQVATH).

It belongs to the nematode receptor-like protein str family. Interacts with odr-4.

The protein resides in the cell projection. Its subcellular location is the cilium membrane. Its function is as follows. An odorant receptor which affects chemotaxis to the volatile odorant diacetyl. Specifies AWA neuronal cell fate via the odr-7 pathway. The polypeptide is Serpentine receptor class r-10 (Caenorhabditis briggsae).